An 87-amino-acid polypeptide reads, in one-letter code: Acyl carrier protein 3 (87 aa).

Residues 1 to 79 form the Carrier domain; it reads MSNPTVLDQI…DLVTYIEAAL (79 aa). The residue at position 39 (Ser-39) is an O-(pantetheine 4'-phosphoryl)serine.

Belongs to the acyl carrier protein (ACP) family. 4'-phosphopantetheine is transferred from CoA to a specific serine of apo-ACP by AcpS. This modification is essential for activity because fatty acids are bound in thioester linkage to the sulfhydryl of the prosthetic group.

It localises to the cytoplasm. The protein operates within lipid metabolism; fatty acid biosynthesis. Its function is as follows. Carrier of the growing fatty acid chain in fatty acid biosynthesis. The protein is Acyl carrier protein 3 of Ralstonia nicotianae (strain ATCC BAA-1114 / GMI1000) (Ralstonia solanacearum).